The primary structure comprises 169 residues: MAVLEVLTFPDDRLRTVAKPVKTVTPEIQTFIDDMIETMYDEEGIGLAATQVDFHQRIVVIDVSETRDEPMVLINPVITQKSGDDGIEEGCLSVPGAKGMVPRSAEVSVTALDRDGNEFSFDADDLLAICVQHELDHLEGKLFVDYLSPLKRKRIKEKLEKIKKFNEKN.

The Fe cation site is built by Cys-91 and His-133. Residue Glu-134 is part of the active site. Position 137 (His-137) interacts with Fe cation.

Belongs to the polypeptide deformylase family. Requires Fe(2+) as cofactor.

It catalyses the reaction N-terminal N-formyl-L-methionyl-[peptide] + H2O = N-terminal L-methionyl-[peptide] + formate. In terms of biological role, removes the formyl group from the N-terminal Met of newly synthesized proteins. Requires at least a dipeptide for an efficient rate of reaction. N-terminal L-methionine is a prerequisite for activity but the enzyme has broad specificity at other positions. This is Peptide deformylase from Aliivibrio salmonicida (strain LFI1238) (Vibrio salmonicida (strain LFI1238)).